We begin with the raw amino-acid sequence, 559 residues long: Subtelomeric hrmA-associated cluster protein AFUB_079030 (559 aa).

Disordered stretches follow at residues 163 to 190 (AKHP…TKPE), 298 to 351 (RESN…TGMA), 427 to 451 (SITS…HSAS), and 525 to 559 (FRTG…RPHV). Residues 169–179 (GGKPPAGAPPG) are compositionally biased toward low complexity. Composition is skewed to basic and acidic residues over residues 180–189 (KKGDPEKTKP) and 300–325 (SNQK…DNAR). Residues 336 to 346 (NSTSPMSNSAE) show a composition bias toward polar residues.

In terms of biological role, part of the subtelomeric hrmA-associated cluster (HAC) containing genes that alter the hyphal surface (such as reduced total chitin or increased beta-glucan exposure) and perturb inter-hyphal interactions within the developing biofilms, resulting in a loss of vertically aligned polarized growing filaments. Consequently, this hypoxia-typic morphotype (called H-MORPH) with altered biofilm architecture leads to increased hypoxia fitness, increased host inflammation, rapid disease progression, and mortality in a murine model of invasive aspergillosis. This chain is Subtelomeric hrmA-associated cluster protein AFUB_079030, found in Aspergillus fumigatus (strain CBS 144.89 / FGSC A1163 / CEA10) (Neosartorya fumigata).